A 102-amino-acid chain; its full sequence is Amoebiasin-1 (102 aa).

The BC loop signature appears at 27 to 32; sequence NPTTGY. The DE loop motif lies at 51–61; the sequence is DQHAPGICGCG. Positions 85-93 match the FG loop motif; that stretch reads PWAPNANDR.

This sequence belongs to the protease inhibitor I42 family. As to quaternary structure, monomer. During oxidative conditions, forms homooligomers; disulfide-linked. Interacts with cysteine protease CP2. Interacts with cysteine protease CP5. Post-translationally, during oxidative conditions, cys-39, cys-58 and cys-60 react to form intra- and inter-molecular disulfide bonds resulting in the loss of the protein inhibitory activity.

The protein resides in the cytoplasm. In terms of biological role, cysteine protease inhibitor. Inhibits cysteine proteases CP1, CP2 and CP5. May protect the cytosol against cysteine proteases released by damaged intracellular vesicles. The sequence is that of Amoebiasin-1 from Entamoeba histolytica (strain ATCC 30459 / HM-1:IMSS / ABRM).